A 125-amino-acid polypeptide reads, in one-letter code: Morphine 6-dehydrogenase (125 aa).

Residues 9-18 (GHSIPVLGFI) and 74-111 (SALG…IERE) each bind NADP(+).

This sequence belongs to the aldo/keto reductase family. Monomer. In terms of processing, the N-terminus is blocked.

The protein localises to the cytoplasm. It carries out the reaction morphine + NAD(+) = morphinone + NADH + H(+). The catalysed reaction is morphine + NADP(+) = morphinone + NADPH + H(+). Its activity is regulated as follows. Strongly inhibited by sulfhydryl reagents and quercetin, but not by pyrazole, barbital and indomethacine. Functionally, catalyzes the dehydrogenation of morphine to morphinone. Uses both NAD and NADP, but the activity is much greater with NAD than with NADP. In Oryctolagus cuniculus (Rabbit), this protein is Morphine 6-dehydrogenase.